The following is a 328-amino-acid chain: Biotin synthase (328 aa).

A Radical SAM core domain is found at 48–278; sequence FTGNSASLCS…GKSLSVCGGR (231 aa). Residues C66, C70, and C73 each coordinate [4Fe-4S] cluster. Positions 143 and 203 each coordinate [2Fe-2S] cluster.

This sequence belongs to the radical SAM superfamily. Biotin synthase family. In terms of assembly, homodimer. The cofactor is [4Fe-4S] cluster. [2Fe-2S] cluster is required as a cofactor.

The enzyme catalyses (4R,5S)-dethiobiotin + (sulfur carrier)-SH + 2 reduced [2Fe-2S]-[ferredoxin] + 2 S-adenosyl-L-methionine = (sulfur carrier)-H + biotin + 2 5'-deoxyadenosine + 2 L-methionine + 2 oxidized [2Fe-2S]-[ferredoxin]. It participates in cofactor biosynthesis; biotin biosynthesis; biotin from 7,8-diaminononanoate: step 2/2. Functionally, catalyzes the conversion of dethiobiotin (DTB) to biotin by the insertion of a sulfur atom into dethiobiotin via a radical-based mechanism. This chain is Biotin synthase, found in Pelobacter propionicus (strain DSM 2379 / NBRC 103807 / OttBd1).